We begin with the raw amino-acid sequence, 444 residues long: Adenylosuccinate lyase (444 aa).

N(6)-(1,2-dicarboxyethyl)-AMP is bound by residues 9–10, 73–75, and 97–98; these read RY, KHD, and TS. The active-site Proton donor/acceptor is the H145. A N(6)-(1,2-dicarboxyethyl)-AMP-binding site is contributed by Q219. The active-site Proton donor/acceptor is S269. N(6)-(1,2-dicarboxyethyl)-AMP contacts are provided by residues S270, 275-277, N283, and 314-318; these read KRN and SAERI.

This sequence belongs to the lyase 1 family. Adenylosuccinate lyase subfamily. As to quaternary structure, homotetramer. Residues from neighboring subunits contribute catalytic and substrate-binding residues to each active site.

It catalyses the reaction N(6)-(1,2-dicarboxyethyl)-AMP = fumarate + AMP. The catalysed reaction is (2S)-2-[5-amino-1-(5-phospho-beta-D-ribosyl)imidazole-4-carboxamido]succinate = 5-amino-1-(5-phospho-beta-D-ribosyl)imidazole-4-carboxamide + fumarate. Its pathway is purine metabolism; AMP biosynthesis via de novo pathway; AMP from IMP: step 2/2. The protein operates within purine metabolism; IMP biosynthesis via de novo pathway; 5-amino-1-(5-phospho-D-ribosyl)imidazole-4-carboxamide from 5-amino-1-(5-phospho-D-ribosyl)imidazole-4-carboxylate: step 2/2. In terms of biological role, catalyzes two reactions in de novo purine nucleotide biosynthesis. Catalyzes the breakdown of 5-aminoimidazole- (N-succinylocarboxamide) ribotide (SAICAR or 2-[5-amino-1-(5-phospho-beta-D-ribosyl)imidazole-4-carboxamido]succinate) to 5-aminoimidazole-4-carboxamide ribotide (AICAR or 5-amino-1-(5-phospho-beta-D-ribosyl)imidazole-4-carboxamide) and fumarate, and of adenylosuccinate (ADS or N(6)-(1,2-dicarboxyethyl)-AMP) to adenosine monophosphate (AMP) and fumarate. This Archaeoglobus fulgidus (strain ATCC 49558 / DSM 4304 / JCM 9628 / NBRC 100126 / VC-16) protein is Adenylosuccinate lyase (purB).